The sequence spans 770 residues: Amyloid-beta precursor protein (770 aa).

A signal peptide spans 1–17 (MLPSLALLLLAAWTVRA). Residues 18-701 (LEVPTDGNAG…AEDVGSNKGA (684 aa)) are Extracellular-facing. The GFLD subdomain stretch occupies residues 28-123 (LLAEPQIAMF…PYRCLVGEFV (96 aa)). One can recognise an E1 domain in the interval 28 to 189 (LLAEPQIAMF…RGVEFVCCPL (162 aa)). Cystine bridges form between cysteine 38–cysteine 62, cysteine 73–cysteine 117, cysteine 98–cysteine 105, cysteine 133–cysteine 187, cysteine 144–cysteine 174, and cysteine 158–cysteine 186. 96 to 110 (NWCKRGRKQCKTHTH) contributes to the heparin binding site. The cuBD subdomain stretch occupies residues 131–189 (DKCKFLHQERMDVCETHLHWHTVAKETCSEKSTNLHDYGMLLPCGIDKFRGVEFVCCPL). Residues 135-155 (FLHQERMDVCETHLHWHTVAK) form a copper-binding region. The Cu(2+) site is built by histidine 147, histidine 151, and tyrosine 168. The zinc-binding stretch occupies residues 181 to 188 (GVEFVCCP). Positions 183, 186, and 187 each coordinate Zn(2+). Positions 196-207 (IDSADAEEDDSD) are enriched in acidic residues. Positions 196–283 (IDSADAEEDD…TTTTTTTESV (88 aa)) are disordered. A Phosphoserine; by CK2 modification is found at serine 198. Position 206 is a phosphoserine; by CK1 (serine 206). Sulfotyrosine occurs at positions 217 and 262. Residues 228–264 (VAEEEEVADVEEEEAEDDEDVEDGDEVEEEAEEPYEE) are compositionally biased toward acidic residues. Low complexity predominate over residues 268–281 (RTTSIATTTTTTTE). Intrachain disulfides connect cysteine 291/cysteine 341, cysteine 300/cysteine 324, and cysteine 316/cysteine 337. The 51-residue stretch at 291-341 (CSEQAETGPCRAMISRWYFDVTEGKCAPFFYGGCGGNRNNFDTEEYCMAVC) folds into the BPTI/Kunitz inhibitor domain. The residue at position 336 (tyrosine 336) is a Sulfotyrosine. An OX-2 motif is present at residues 344-365 (VSSQSLLKTTSEPLPQDPVKLP). One can recognise an E2 domain in the interval 374 to 565 (AVDKYLETPG…EEIQDEVDEL (192 aa)). Residues 391-423 (FQKAKERLEAKHRERMSQVMREWEEAERQAKNL) are heparin-binding. At serine 441 the chain carries Phosphoserine. Positions 491–522 (FNMLKKYVRAEQKDRQHTLKHFEHVRMVDPKK) are heparin-binding. A Phosphotyrosine modification is found at tyrosine 497. The segment at 523–540 (AAQIRSQVMTHLRVIYER) is collagen-binding. Asparagine 542 and asparagine 571 each carry an N-linked (GlcNAc...) asparagine glycan. Serine 656 carries an O-linked (Xyl...) (chondroitin sulfate) serine; in L-APP isoforms glycan. Cu(2+) contacts are provided by histidine 677 and histidine 685. Positions 677 and 685 each coordinate Zn(2+). Residues 695–722 (VGSNKGAIIGLMVGGVVIATVIVITLVM) are interaction with PSEN1. A helical transmembrane segment spans residues 702–722 (IIGLMVGGVVIATVIVITLVM). Topologically, residues 723–770 (LKKKQYTSIHHGVVEVDAAVTPEERHLSKMQQNGYENPTYKFFEQMQN) are cytoplasmic. Residues 724 to 734 (KKKQYTSIHHG) carry the Basolateral sorting signal motif. Threonine 729 bears the Phosphothreonine mark. Residue serine 730 is modified to Phosphoserine; by APP-kinase I. The tract at residues 732-751 (HHGVVEVDAAVTPEERHLSK) is interaction with G(o)-alpha. Threonine 743 is modified (phosphothreonine; by CDK5 and MAPK10). The segment at 756–770 (GYENPTYKFFEQMQN) is required for the interaction with KIF5B and for anterograde transport in axons. A Phosphotyrosine; by ABL1 modification is found at tyrosine 757. The short motif at 757–762 (YENPTY) is the YENPXY motif; contains endocytosis signal element. Residue lysine 763 forms a Glycyl lysine isopeptide (Lys-Gly) (interchain with G-Cter in ubiquitin) linkage.

This sequence belongs to the APP family. Binds, via its C-terminus, to the PID domain of several cytoplasmic proteins, including APBB family members, the APBA family, MAPK8IP1, SHC1 and NUMB and DAB1. Binding to DAB1 inhibits its serine phosphorylation. Interacts (via NPXY motif) with DAB2 (via PID domain); the interaction is impaired by tyrosine phosphorylation of the NPXY motif. Also interacts with GPCR-like protein BPP, APPBP1, IB1, KNS2 (via its TPR domains), APPBP2 (via BaSS) and DDB1. In vitro, it binds MAPT via the MT-binding domains. Associates with microtubules in the presence of ATP and in a kinesin-dependent manner. Interacts, through a C-terminal domain, with GNAO1. Amyloid-beta protein 42 binds CHRNA7 in hippocampal neurons. Amyloid-beta associates with HADH2. Interacts with CPEB1, ANKS1B and AGER. Interacts with ITM2B. Interacts with ITM2C. Interacts with IDE. Can form homodimers; dimerization is enhanced in the presence of Cu(2+) ions. Can form homodimers; this is promoted by heparin binding. Amyloid-beta protein 40 interacts with S100A9. CTF-alpha product of APP interacts with GSAP. Isoform APP695 interacts with SORL1 (via N-terminal ectodomain); this interaction retains APP in the trans-Golgi network and reduces processing into soluble APP-alpha and amyloid-beta peptides. The C99 fragment also interacts with SORL1. Isoform APP751 interacts with SORL1. Isoform APP770 interacts with SORL1. Interacts with PLD3. Interacts with VDAC1. Interacts with NSG1; could regulate APP processing. Amyloid-beta protein 42 interacts with FPR2. Interacts with SYT7. Interacts (via transmembrane region) with PSEN1; the interaction is direct. Interacts with LRRK2. Interacts (via cytoplasmic domain) with KIF5B. Interacts (via C-terminus) with APBB2/FE65L1 (via C-terminus). Interacts (via intracellular domain) with APBB3. Post-translationally, proteolytically processed under normal cellular conditions. Cleavage either by alpha-secretase, beta-secretase or theta-secretase leads to generation and extracellular release of soluble APP peptides, S-APP-alpha and S-APP-beta, and the retention of corresponding membrane-anchored C-terminal fragments, C80, C83 and C99. Subsequent processing of C80 and C83 by gamma-secretase yields P3 peptides. This is the major secretory pathway and is non-amyloidogenic. Alternatively, presenilin/nicastrin-mediated gamma-secretase processing of C99 releases the amyloid-beta proteins, amyloid-beta protein 40 and amyloid-beta protein 42, major components of amyloid plaques, and the cytotoxic C-terminal fragments, gamma-CTF(50), gamma-CTF(57) and gamma-CTF(59). PSEN1 cleavage is more efficient with C83 than with C99 as substrate (in vitro). Amyloid-beta protein 40 and Amyloid-beta protein 42 are cleaved by ACE. Many other minor amyloid-beta peptides, amyloid-beta 1-X peptides, are found in cerebral spinal fluid (CSF) including the amyloid-beta X-15 peptides, produced from the cleavage by alpha-secretase. Proteolytically cleaved by caspases during neuronal apoptosis. Cleavage at Asp-739 by either caspase-3, -8 or -9 results in the production of the neurotoxic C31 peptide and the increased production of amyloid-beta peptides. In terms of processing, N-glycosylated. Post-translationally, O-glycosylated. O-linkage of chondroitin sulfate to the L-APP isoforms produces the APP proteoglycan core proteins, the appicans. The chondroitin sulfate chain of appicans contains 4-O-sulfated galactose in the linkage region and chondroitin sulfate E in the repeated disaccharide region. Phosphorylation in the C-terminal on tyrosine, threonine and serine residues is neuron-specific. Phosphorylation can affect APP processing, neuronal differentiation and interaction with other proteins. Phosphorylated on Thr-743 in neuronal cells by Cdc5 kinase and Mapk10, in dividing cells by Cdc2 kinase in a cell-cycle dependent manner with maximal levels at the G2/M phase and, in vitro, by GSK-3-beta. The Thr-743 phosphorylated form causes a conformational change which reduces binding of Fe65 family members. In dopaminergic (DA) neurons, phosphorylation on Thr-743 by LRKK2 promotes the production and the nuclear translocation of the APP intracellular domain (AICD) which induces DA neuron apoptosis. Phosphorylation on Tyr-757 is required for SHC binding. Phosphorylated in the extracellular domain by casein kinases on both soluble and membrane-bound APP. This phosphorylation is inhibited by heparin. In terms of processing, extracellular binding and reduction of copper, results in a corresponding oxidation of Cys-144 and Cys-158, and the formation of a disulfide bond. Post-translationally, trophic-factor deprivation triggers the cleavage of surface APP by beta-secretase to release sAPP-beta which is further cleaved to release an N-terminal fragment of APP (N-APP). Amyloid-beta peptides are degraded by IDE. In terms of processing, sulfated on tyrosine residues. In terms of tissue distribution, expressed in the brain. In the brain, non-L-APP isoforms are expressed in neurons, isoform APP695 being the predominant form. In astrocytes and microglial cells, almost 50% is L-isoform (appican).

Its subcellular location is the cell membrane. It is found in the membrane. The protein localises to the perikaryon. The protein resides in the cell projection. It localises to the growth cone. Its subcellular location is the clathrin-coated pit. It is found in the early endosome. The protein localises to the cytoplasmic vesicle. The protein resides in the endoplasmic reticulum. It localises to the golgi apparatus. Its subcellular location is the cell surface. It is found in the nucleus. The protein localises to the cytoplasm. The protein resides in the secreted. In terms of biological role, functions as a cell surface receptor and performs physiological functions on the surface of neurons relevant to neurite growth, neuronal adhesion and axonogenesis. Interaction between APP molecules on neighboring cells promotes synaptogenesis. Involved in cell mobility and transcription regulation through protein-protein interactions. Can promote transcription activation through binding to APBB1-KAT5 and inhibit Notch signaling through interaction with Numb. Couples to apoptosis-inducing pathways such as those mediated by G(o) and JIP. Inhibits G(o)-alpha ATPase activity. Acts as a kinesin I membrane receptor, mediating the axonal transport of beta-secretase and presenilin 1. By acting as a kinesin I membrane receptor, plays a role in axonal anterograde transport of cargo towards synapses in axons. May be involved in copper homeostasis/oxidative stress through copper ion reduction. Can regulate neurite outgrowth through binding to components of the extracellular matrix such as heparin and collagen I and IV. The splice isoforms that contain the BPTI domain possess protease inhibitor activity. Induces a AGER-dependent pathway that involves activation of p38 MAPK, resulting in internalization of amyloid-beta peptide and leading to mitochondrial dysfunction in cultured mitochondrial dysfunction in cultured cortical neurons. Provides Cu(2+) ions for GPC1 which are required for release of nitric oxide (NO) and subsequent degradation of the heparan sulfate chains on GPC1. Functionally, amyloid-beta peptides are lipophilic metal chelators with metal-reducing activity. Binds transient metals such as copper, zinc and iron. Rat and mouse amyloid-beta peptides bind only weakly transient metals and have little reducing activity due to substitutions of transient metal chelating residues. Amyloid-beta protein 42 may activate mononuclear phagocytes in the brain and elicits inflammatory responses. Promotes both tau aggregation and TPK II-mediated phosphorylation. Also binds GPC1 in lipid rafts. Its function is as follows. Appicans elicit adhesion of neural cells to the extracellular matrix and may regulate neurite outgrowth in the brain. The gamma-CTF peptides as well as the caspase-cleaved peptides, including C31, are potent enhancers of neuronal apoptosis. This is Amyloid-beta precursor protein from Rattus norvegicus (Rat).